Here is a 971-residue protein sequence, read N- to C-terminus: Nitrogen regulatory protein areA (971 aa).

5 disordered regions span residues I39–A61, H146–S169, Q262–T307, S390–T416, and D587–P691. The segment covering A42–A59 has biased composition (polar residues). A compositionally biased stretch (basic and acidic residues) spans H146–A159. Composition is skewed to polar residues over residues Q262–N274 and F297–T307. A compositionally biased stretch (low complexity) spans S390–S400. Composition is skewed to polar residues over residues L597 to R606 and N632 to P645. Low complexity-rich tracts occupy residues S654–R663 and A680–P691. The GATA-type zinc finger occupies C694–C718. A disordered region spans residues N742 to S918. Polar residues predominate over residues G744–V794. Positions T796 to T826 are enriched in low complexity. Positions G832–G845 are enriched in gly residues. Over residues S863–S875 the composition is skewed to polar residues. Residues S892–S918 are compositionally biased toward low complexity.

Its subcellular location is the nucleus. Its function is as follows. Major nitrogen regulatory protein. Positively acting regulatory gene of nitrogen metabolite repression. The sequence is that of Nitrogen regulatory protein areA (AREA) from Fusarium fujikuroi (Bakanae and foot rot disease fungus).